Reading from the N-terminus, the 261-residue chain is Endomucin (261 aa).

Positions 1 to 18 are cleaved as a signal peptide; the sequence is MELLQVTILFLLPSICSS. N-linked (GlcNAc...) asparagine glycosylation is found at N19, N28, N98, and N104. The Extracellular portion of the chain corresponds to 19 to 190; that stretch reads NSTGVLEAAN…TSATSRSYSS (172 aa). 2 stretches are compositionally biased toward polar residues: residues 118–134 and 146–171; these read TLQS…SIKT and ASPS…SQVI. Residues 118 to 183 are disordered; sequence TLQSSKPKTE…EGGKNASTSA (66 aa). N-linked (GlcNAc...) asparagine glycosylation is found at N164 and N178. Residues 191 to 211 form a helical membrane-spanning segment; the sequence is IILPVVIALIVITLSVFVLVG. Residues 212–261 lie on the Cytoplasmic side of the membrane; the sequence is LYRMCWKADPGTPENGNDQPQSDKESVKLLTVKTISHESGEHSAQGKTKN. S237 bears the Phosphoserine mark.

Highly O-glycosylated. Sialic acid-rich glycoprotein. Expressed in heart, kidney and lung.

The protein resides in the cell membrane. Its subcellular location is the membrane. It is found in the secreted. Endothelial sialomucin, also called endomucin or mucin-like sialoglycoprotein, which interferes with the assembly of focal adhesion complexes and inhibits interaction between cells and the extracellular matrix. In Homo sapiens (Human), this protein is Endomucin (EMCN).